The primary structure comprises 293 residues: 4-hydroxy-tetrahydrodipicolinate synthase (293 aa).

Position 46 (Thr46) interacts with pyruvate. Residue Tyr133 is the Proton donor/acceptor of the active site. The active-site Schiff-base intermediate with substrate is Lys161. A pyruvate-binding site is contributed by Val202.

The protein belongs to the DapA family. As to quaternary structure, homotetramer; dimer of dimers.

Its subcellular location is the cytoplasm. The enzyme catalyses L-aspartate 4-semialdehyde + pyruvate = (2S,4S)-4-hydroxy-2,3,4,5-tetrahydrodipicolinate + H2O + H(+). It functions in the pathway amino-acid biosynthesis; L-lysine biosynthesis via DAP pathway; (S)-tetrahydrodipicolinate from L-aspartate: step 3/4. In terms of biological role, catalyzes the condensation of (S)-aspartate-beta-semialdehyde [(S)-ASA] and pyruvate to 4-hydroxy-tetrahydrodipicolinate (HTPA). This Wolbachia pipientis wMel protein is 4-hydroxy-tetrahydrodipicolinate synthase.